Consider the following 144-residue polypeptide: Large ribosomal subunit protein uL11 (144 aa).

Belongs to the universal ribosomal protein uL11 family. As to quaternary structure, part of the ribosomal stalk of the 50S ribosomal subunit. Interacts with L10 and the large rRNA to form the base of the stalk. L10 forms an elongated spine to which L12 dimers bind in a sequential fashion forming a multimeric L10(L12)X complex. Post-translationally, one or more lysine residues are methylated.

In terms of biological role, forms part of the ribosomal stalk which helps the ribosome interact with GTP-bound translation factors. The chain is Large ribosomal subunit protein uL11 from Parafrankia sp. (strain EAN1pec).